The primary structure comprises 98 residues: Large ribosomal subunit protein eL21 (98 aa).

The span at 1–24 (MVKKAHSFRRKTRGKLSKHPRRRG) shows a compositional bias: basic residues. Residues 1 to 27 (MVKKAHSFRRKTRGKLSKHPRRRGLPP) form a disordered region.

The protein belongs to the eukaryotic ribosomal protein eL21 family. As to quaternary structure, part of the 50S ribosomal subunit.

This is Large ribosomal subunit protein eL21 from Thermococcus kodakarensis (strain ATCC BAA-918 / JCM 12380 / KOD1) (Pyrococcus kodakaraensis (strain KOD1)).